Here is a 61-residue protein sequence, read N- to C-terminus: Sperm protamine P1 (61 aa).

The tract at residues 1–61 (MARYRRRSRS…RRYSRRGRRR (61 aa)) is disordered.

This sequence belongs to the protamine P1 family. Testis.

It localises to the nucleus. The protein localises to the chromosome. Its function is as follows. Protamines substitute for histones in the chromatin of sperm during the haploid phase of spermatogenesis. They compact sperm DNA into a highly condensed, stable and inactive complex. In Dasyurus hallucatus (Northern quoll), this protein is Sperm protamine P1 (PRM1).